The primary structure comprises 194 residues: MYLDQIKTELLEAQDVLQKFIADENNIKLIQQAALLISDSFKQGGKVLSCGNGGSHCDAMHFAEELTGRYRENRPGYPAIAISDVSHLSCVSNDFGYDYVFSRYVEAVGKPGDVLFGLSTSGNSKNVLNAIQAAKQKDMKVIAMTGKDGGEMAGLADVEIRVPHFRYADRIQEIHIKVIHILMMLIEFEMAKDV.

An SIS domain is found at 37–194 (ISDSFKQGGK…LIEFEMAKDV (158 aa)). A substrate-binding site is contributed by 52–54 (NGG). Zn(2+)-binding residues include H61 and E65. Substrate is bound by residues E65, 93–94 (ND), 119–121 (STS), S124, and Q172. Positions 172 and 180 each coordinate Zn(2+).

It belongs to the SIS family. GmhA subfamily. Homotetramer. It depends on Zn(2+) as a cofactor.

It is found in the cytoplasm. It catalyses the reaction 2 D-sedoheptulose 7-phosphate = D-glycero-alpha-D-manno-heptose 7-phosphate + D-glycero-beta-D-manno-heptose 7-phosphate. It functions in the pathway carbohydrate biosynthesis; D-glycero-D-manno-heptose 7-phosphate biosynthesis; D-glycero-alpha-D-manno-heptose 7-phosphate and D-glycero-beta-D-manno-heptose 7-phosphate from sedoheptulose 7-phosphate: step 1/1. In terms of biological role, catalyzes the isomerization of sedoheptulose 7-phosphate in D-glycero-D-manno-heptose 7-phosphate. This chain is Phosphoheptose isomerase, found in Actinobacillus succinogenes (strain ATCC 55618 / DSM 22257 / CCUG 43843 / 130Z).